Reading from the N-terminus, the 199-residue chain is Small ribosomal subunit protein mS38 (199 aa).

It belongs to the mitochondrion-specific ribosomal protein mS38 family. Component of the mitochondrial small ribosomal subunit (mt-SSU). Mature mammalian 55S mitochondrial ribosomes consist of a small (28S) and a large (39S) subunit. The 28S small subunit contains a 12S ribosomal RNA (12S mt-rRNA) and 30 different proteins. The 39S large subunit contains a 16S rRNA (16S mt-rRNA), a copy of mitochondrial valine transfer RNA (mt-tRNA(Val)), which plays an integral structural role, and 52 different proteins. Interacts with Aurora-A. In terms of tissue distribution, ubiquitously expressed and especially highly expressed in heart, skeletal muscle and testis.

The protein localises to the mitochondrion matrix. It is found in the nucleus. May act as a negative regulator of Aurora-A kinase, by down-regulation through proteasome-dependent degradation. This chain is Small ribosomal subunit protein mS38 (AURKAIP1), found in Homo sapiens (Human).